The primary structure comprises 352 residues: AP2/ERF and B3 domain-containing transcription factor At1g51120 (352 aa).

Residues Met1–Ser20 are disordered. Over residues Val7–Ser20 the composition is skewed to polar residues. Positions Lys46–Pro103 form a DNA-binding region, AP2/ERF. The segment at residues Phe178–His297 is a DNA-binding region (TF-B3).

Belongs to the AP2/ERF transcription factor family. RAV subfamily.

The protein resides in the nucleus. Probably acts as a transcriptional activator. Binds to the GCC-box pathogenesis-related promoter element. May be involved in the regulation of gene expression by stress factors and by components of stress signal transduction pathways. The protein is AP2/ERF and B3 domain-containing transcription factor At1g51120 of Arabidopsis thaliana (Mouse-ear cress).